Consider the following 31-residue polypeptide: Photosystem II reaction center protein T (31 aa).

The helical transmembrane segment at 3–23 threads the bilayer; sequence ALVYTFLLVGTLGIIFFSIFF.

Belongs to the PsbT family. As to quaternary structure, PSII is composed of 1 copy each of membrane proteins PsbA, PsbB, PsbC, PsbD, PsbE, PsbF, PsbH, PsbI, PsbJ, PsbK, PsbL, PsbM, PsbT, PsbY, PsbZ, Psb30/Ycf12, at least 3 peripheral proteins of the oxygen-evolving complex and a large number of cofactors. It forms dimeric complexes.

It is found in the plastid. Its subcellular location is the chloroplast thylakoid membrane. In terms of biological role, found at the monomer-monomer interface of the photosystem II (PS II) dimer, plays a role in assembly and dimerization of PSII. PSII is a light-driven water plastoquinone oxidoreductase, using light energy to abstract electrons from H(2)O, generating a proton gradient subsequently used for ATP formation. The polypeptide is Photosystem II reaction center protein T (Bigelowiella natans (Pedinomonas minutissima)).